A 323-amino-acid chain; its full sequence is tRNA dimethylallyltransferase (323 aa).

ATP is bound at residue 16–23 (GPTASGKT). Residue 18–23 (TASGKT) participates in substrate binding. Interaction with substrate tRNA stretches follow at residues 41 to 44 (DSAL), 165 to 169 (QRIQR), 253 to 258 (RCVGYR), and 286 to 293 (KRQITWLR).

It belongs to the IPP transferase family. In terms of assembly, monomer. Mg(2+) serves as cofactor.

The catalysed reaction is adenosine(37) in tRNA + dimethylallyl diphosphate = N(6)-dimethylallyladenosine(37) in tRNA + diphosphate. Catalyzes the transfer of a dimethylallyl group onto the adenine at position 37 in tRNAs that read codons beginning with uridine, leading to the formation of N6-(dimethylallyl)adenosine (i(6)A). The chain is tRNA dimethylallyltransferase from Ralstonia nicotianae (strain ATCC BAA-1114 / GMI1000) (Ralstonia solanacearum).